The chain runs to 406 residues: Nicotinate phosphoribosyltransferase (406 aa).

His-226 bears the Phosphohistidine; by autocatalysis mark.

It belongs to the NAPRTase family. Post-translationally, transiently phosphorylated on a His residue during the reaction cycle. Phosphorylation strongly increases the affinity for substrates and increases the rate of nicotinate D-ribonucleotide production. Dephosphorylation regenerates the low-affinity form of the enzyme, leading to product release.

The enzyme catalyses nicotinate + 5-phospho-alpha-D-ribose 1-diphosphate + ATP + H2O = nicotinate beta-D-ribonucleotide + ADP + phosphate + diphosphate. Its pathway is cofactor biosynthesis; NAD(+) biosynthesis; nicotinate D-ribonucleotide from nicotinate: step 1/1. Catalyzes the synthesis of beta-nicotinate D-ribonucleotide from nicotinate and 5-phospho-D-ribose 1-phosphate at the expense of ATP. This Verminephrobacter eiseniae (strain EF01-2) protein is Nicotinate phosphoribosyltransferase.